The primary structure comprises 450 residues: Phosphoglucosamine mutase (450 aa).

Ser102 acts as the Phosphoserine intermediate in catalysis. Mg(2+)-binding residues include Ser102, Asp242, Asp244, and Asp246. Ser102 carries the post-translational modification Phosphoserine.

Belongs to the phosphohexose mutase family. Mg(2+) is required as a cofactor. Post-translationally, activated by phosphorylation.

It catalyses the reaction alpha-D-glucosamine 1-phosphate = D-glucosamine 6-phosphate. Catalyzes the conversion of glucosamine-6-phosphate to glucosamine-1-phosphate. The chain is Phosphoglucosamine mutase from Lachnospira eligens (strain ATCC 27750 / DSM 3376 / VPI C15-48 / C15-B4) (Eubacterium eligens).